Reading from the N-terminus, the 530-residue chain is Phosphoenolpyruvate carboxykinase (ATP) (530 aa).

3 residues coordinate substrate: Arg-59, Tyr-198, and Lys-204. ATP-binding positions include Lys-204, His-223, and 239–247 (GLSGTGKTT). Mn(2+) contacts are provided by Lys-204 and His-223. Asp-260 contributes to the Mn(2+) binding site. ATP-binding positions include Glu-288, Arg-325, 440–441 (RI), and Thr-446. Residue Arg-325 coordinates substrate.

It belongs to the phosphoenolpyruvate carboxykinase (ATP) family. Requires Mn(2+) as cofactor.

Its subcellular location is the cytoplasm. It catalyses the reaction oxaloacetate + ATP = phosphoenolpyruvate + ADP + CO2. The protein operates within carbohydrate biosynthesis; gluconeogenesis. Its function is as follows. Involved in the gluconeogenesis. Catalyzes the conversion of oxaloacetate (OAA) to phosphoenolpyruvate (PEP) through direct phosphoryl transfer between the nucleoside triphosphate and OAA. This chain is Phosphoenolpyruvate carboxykinase (ATP), found in Azobacteroides pseudotrichonymphae genomovar. CFP2.